A 228-amino-acid polypeptide reads, in one-letter code: Cytochrome c oxidase subunit 2 (228 aa).

The Mitochondrial intermembrane segment spans residues 1–14; that stretch reads MANHSQLGFQDASS. Residues 15 to 45 form a helical membrane-spanning segment; the sequence is PIMEELVEFHDHALIVALAICSLVLYLLAHM. Residues 46–58 are Mitochondrial matrix-facing; the sequence is LMEKLSSNAVDAQ. A helical membrane pass occupies residues 59-86; that stretch reads EVELIWTILPAIVLVLLALPSLQILYMM. Over 87–228 the chain is Mitochondrial intermembrane; the sequence is DEIDEPDLTL…EAWSSLLSSS (142 aa). Residues H160, C195, E197, C199, H203, and M206 each coordinate Cu cation. Position 197 (E197) interacts with Mg(2+).

This sequence belongs to the cytochrome c oxidase subunit 2 family. Component of the cytochrome c oxidase (complex IV, CIV), a multisubunit enzyme composed of 14 subunits. The complex is composed of a catalytic core of 3 subunits MT-CO1, MT-CO2 and MT-CO3, encoded in the mitochondrial DNA, and 11 supernumerary subunits COX4I, COX5A, COX5B, COX6A, COX6B, COX6C, COX7A, COX7B, COX7C, COX8 and NDUFA4, which are encoded in the nuclear genome. The complex exists as a monomer or a dimer and forms supercomplexes (SCs) in the inner mitochondrial membrane with NADH-ubiquinone oxidoreductase (complex I, CI) and ubiquinol-cytochrome c oxidoreductase (cytochrome b-c1 complex, complex III, CIII), resulting in different assemblies (supercomplex SCI(1)III(2)IV(1) and megacomplex MCI(2)III(2)IV(2)). Found in a complex with TMEM177, COA6, COX18, COX20, SCO1 and SCO2. Interacts with TMEM177 in a COX20-dependent manner. Interacts with COX20. Interacts with COX16. Cu cation serves as cofactor.

The protein resides in the mitochondrion inner membrane. It catalyses the reaction 4 Fe(II)-[cytochrome c] + O2 + 8 H(+)(in) = 4 Fe(III)-[cytochrome c] + 2 H2O + 4 H(+)(out). Functionally, component of the cytochrome c oxidase, the last enzyme in the mitochondrial electron transport chain which drives oxidative phosphorylation. The respiratory chain contains 3 multisubunit complexes succinate dehydrogenase (complex II, CII), ubiquinol-cytochrome c oxidoreductase (cytochrome b-c1 complex, complex III, CIII) and cytochrome c oxidase (complex IV, CIV), that cooperate to transfer electrons derived from NADH and succinate to molecular oxygen, creating an electrochemical gradient over the inner membrane that drives transmembrane transport and the ATP synthase. Cytochrome c oxidase is the component of the respiratory chain that catalyzes the reduction of oxygen to water. Electrons originating from reduced cytochrome c in the intermembrane space (IMS) are transferred via the dinuclear copper A center (CU(A)) of subunit 2 and heme A of subunit 1 to the active site in subunit 1, a binuclear center (BNC) formed by heme A3 and copper B (CU(B)). The BNC reduces molecular oxygen to 2 water molecules using 4 electrons from cytochrome c in the IMS and 4 protons from the mitochondrial matrix. In Anas platyrhynchos (Mallard), this protein is Cytochrome c oxidase subunit 2 (MT-CO2).